Here is a 200-residue protein sequence, read N- to C-terminus: Holliday junction branch migration complex subunit RuvA (200 aa).

Positions 1 to 64 (MIGRIVGTLI…EDSHTLYGFI (64 aa)) are domain I. Residues 65 to 143 (DKNERALFRV…QAAKTDLFSA (79 aa)) are domain II. The interval 144-149 (PAVLRQ) is flexible linker. The domain III stretch occupies residues 150–200 (VQADPRQEAEAALISLGYKPQEAAKAIAGVPVDAANSEDVIKAALKGMLRK).

It belongs to the RuvA family. Homotetramer. Forms an RuvA(8)-RuvB(12)-Holliday junction (HJ) complex. HJ DNA is sandwiched between 2 RuvA tetramers; dsDNA enters through RuvA and exits via RuvB. An RuvB hexamer assembles on each DNA strand where it exits the tetramer. Each RuvB hexamer is contacted by two RuvA subunits (via domain III) on 2 adjacent RuvB subunits; this complex drives branch migration. In the full resolvosome a probable DNA-RuvA(4)-RuvB(12)-RuvC(2) complex forms which resolves the HJ.

The protein localises to the cytoplasm. The RuvA-RuvB-RuvC complex processes Holliday junction (HJ) DNA during genetic recombination and DNA repair, while the RuvA-RuvB complex plays an important role in the rescue of blocked DNA replication forks via replication fork reversal (RFR). RuvA specifically binds to HJ cruciform DNA, conferring on it an open structure. The RuvB hexamer acts as an ATP-dependent pump, pulling dsDNA into and through the RuvAB complex. HJ branch migration allows RuvC to scan DNA until it finds its consensus sequence, where it cleaves and resolves the cruciform DNA. The polypeptide is Holliday junction branch migration complex subunit RuvA (Marinomonas sp. (strain MWYL1)).